Consider the following 811-residue polypeptide: G-type lectin S-receptor-like serine/threonine-protein kinase LECRK3 (811 aa).

A signal peptide spans 1 to 23 (MAHLLFLPILQLLLLYCTKSAQA). Positions 24-153 (QLNISIGSSL…DGATKWESFG (130 aa)) constitute a Bulb-type lectin domain. Over 24-464 (QLNISIGSSL…DKKYWILGSS (441 aa)) the chain is Extracellular. N-linked (GlcNAc...) asparagine glycosylation is found at Asn-26, Asn-39, Asn-59, Asn-219, Asn-226, Asn-237, and Asn-242. The EGF-like; atypical domain maps to 292-344 (PENICQSIQTMVGSGACGFNSYCTIDGTKNTTSCLCPQNYKFIDDKRKYKGCR). 5 disulfide bridges follow: Cys-296-Cys-314, Cys-308-Cys-325, Cys-327-Cys-343, Cys-389-Cys-411, and Cys-393-Cys-399. An N-linked (GlcNAc...) asparagine glycan is attached at Asn-321. One can recognise a PAN domain in the interval 352-430 (CDLDETTAML…GKMDVNVPRT (79 aa)). A helical membrane pass occupies residues 465–485 (LLFGSSVLVNFLLISVMLFGT). Topologically, residues 486–811 (YCSITSRKKI…DPSSYISSLA (326 aa)) are cytoplasmic. A Protein kinase domain is found at 521-795 (GGFQEVLGTG…KVTQMLDGAV (275 aa)). ATP is bound by residues 527-535 (LGTGASGVV) and Lys-551. The active-site Proton acceptor is the Asp-645.

The protein belongs to the protein kinase superfamily. Ser/Thr protein kinase family.

The protein resides in the membrane. The enzyme catalyses L-seryl-[protein] + ATP = O-phospho-L-seryl-[protein] + ADP + H(+). It catalyses the reaction L-threonyl-[protein] + ATP = O-phospho-L-threonyl-[protein] + ADP + H(+). Functionally, involved in resistance against the herbivorous insect brown planthopper (N.lugens, BPH). Member of the BPH3 (BPH resistance locus 3) cluster which contains LECRK1, LECRK2 and LECRK3. This is G-type lectin S-receptor-like serine/threonine-protein kinase LECRK3 from Oryza sativa subsp. indica (Rice).